Reading from the N-terminus, the 317-residue chain is MWLYLLALVGLWNLLRLFRERKVVSHLQDKYVFITGCDSGFGNLLARQLDRRGMRVLAACLTEKGAEQLRSKTSDRLETVILDVTKTESIVAATQWVKERVGNTGLWGLVNNAGISGHLGPNEWMNKQNIASVLDVNLLGMIEVTLSTVPLVRKARGRVVNVASIAGRLSFCGGGYCISKYGVEAFSDSLRRELSYFGVKVAIVEPGFFRTDVTNGVTLSSNFQMLWDQTSSEVREVYGENYLASYLKMLNGLDQRCNKDLSLVTDCMEHALTSCHPRTRYSAGWDAKFFYLPMSYLPTFLVDALFYWTSPKPEKAL.

33–57 (FITGCDSGFGNLLARQLDRRGMRVL) lines the NAD(+) pocket. A substrate-binding site is contributed by Ser164. Tyr176 (proton acceptor) is an active-site residue. The helical transmembrane segment at 289 to 308 (FFYLPMSYLPTFLVDALFYW) threads the bilayer.

It belongs to the short-chain dehydrogenases/reductases (SDR) family. In terms of assembly, homodimer. Not N-glycosylated. As to expression, liver &gt; kidney &gt; brain &gt; lung &gt; testis.

The protein localises to the microsome membrane. Its subcellular location is the endoplasmic reticulum membrane. The catalysed reaction is all-trans-retinol--[retinol-binding protein] + NAD(+) = all-trans-retinal--[retinol-binding protein] + NADH + H(+). It catalyses the reaction all-trans-retinol + NAD(+) = all-trans-retinal + NADH + H(+). The enzyme catalyses 13-cis-retinol + NAD(+) = 13-cis-retinal + NADH + H(+). It carries out the reaction 11-cis-retinol + NAD(+) = 11-cis-retinal + NADH + H(+). The catalysed reaction is 9-cis-retinol + NAD(+) = 9-cis-retinal + NADH + H(+). It catalyses the reaction 5alpha-androstane-3alpha,17beta-diol + NAD(+) = 17beta-hydroxy-5alpha-androstan-3-one + NADH + H(+). The enzyme catalyses androsterone + NAD(+) = 5alpha-androstan-3,17-dione + NADH + H(+). The protein operates within cofactor metabolism; retinol metabolism. In terms of biological role, oxidoreductase with a preference for NAD. Oxidizes all-trans-retinol, 9-cis-retinol, 11-cis-retinol and 13-cis-retinol to the corresponding aldehydes. Has higher activity towards CRBP-bound retinol than with free retinol. Oxidizes 3-alpha-hydroxysteroids. Oxidizes androstanediol and androsterone to dihydrotestosterone and androstanedione. Can also catalyze the reverse reaction. This chain is Retinol dehydrogenase 16, found in Rattus norvegicus (Rat).